Reading from the N-terminus, the 415-residue chain is Multidrug resistance protein MdtA (415 aa).

Positions 1–21 (MKGSYKSRWVIVIVVVIAAIA) are cleaved as a signal peptide. Disordered regions lie at residues 32–60 (SRSAAPGATKQAQQSPAGGRRGMRSGPLA) and 392–415 (EAQSATTPEEKATSREYAKKGARS). A compositionally biased stretch (basic and acidic residues) spans 399 to 415 (PEEKATSREYAKKGARS).

It belongs to the membrane fusion protein (MFP) (TC 8.A.1) family. In terms of assembly, part of a tripartite efflux system composed of MdtA, MdtB and MdtC.

It is found in the cell inner membrane. Its function is as follows. The MdtABC tripartite complex confers resistance against novobiocin and deoxycholate. This is Multidrug resistance protein MdtA from Escherichia coli (strain K12 / MC4100 / BW2952).